Reading from the N-terminus, the 347-residue chain is Heme A synthase (347 aa).

8 consecutive transmembrane segments (helical) span residues valine 14–isoleucine 34, tyrosine 95–phenylalanine 115, leucine 125–leucine 145, leucine 166–leucine 186, leucine 198–alanine 218, phenylalanine 260–leucine 280, leucine 289–valine 309, and isoleucine 311–leucine 331. Histidine 262 contacts heme. Histidine 317 contacts heme.

It belongs to the COX15/CtaA family. Type 2 subfamily. Interacts with CtaB. The cofactor is heme b.

It is found in the cell membrane. It carries out the reaction Fe(II)-heme o + 2 A + H2O = Fe(II)-heme a + 2 AH2. It participates in porphyrin-containing compound metabolism; heme A biosynthesis; heme A from heme O: step 1/1. Functionally, catalyzes the conversion of heme O to heme A by two successive hydroxylations of the methyl group at C8. The first hydroxylation forms heme I, the second hydroxylation results in an unstable dihydroxymethyl group, which spontaneously dehydrates, resulting in the formyl group of heme A. In Ehrlichia canis (strain Jake), this protein is Heme A synthase.